We begin with the raw amino-acid sequence, 610 residues long: Membrane protein insertase YidC (610 aa).

A helical transmembrane segment spans residues 7–27 (FFITIALSILILALWQVFYLG). The tract at residues 36 to 82 (QARIEEQQRQAQQAAQNRQASSSTGDTPQMPANPDSIPGQGDTKAAG) is disordered. A compositionally biased stretch (low complexity) spans 44–55 (RQAQQAAQNRQA). 5 consecutive transmembrane segments (helical) span residues 358–378 (FDLL…FYLI), 387–407 (NFGV…FPLA), 458–478 (WPVL…YVTI), 510–530 (TVPH…IMFL), and 546–566 (IFTW…AGLV).

Belongs to the OXA1/ALB3/YidC family. Type 1 subfamily. In terms of assembly, interacts with the Sec translocase complex via SecD. Specifically interacts with transmembrane segments of nascent integral membrane proteins during membrane integration.

The protein resides in the cell inner membrane. Functionally, required for the insertion and/or proper folding and/or complex formation of integral membrane proteins into the membrane. Involved in integration of membrane proteins that insert both dependently and independently of the Sec translocase complex, as well as at least some lipoproteins. Aids folding of multispanning membrane proteins. The sequence is that of Membrane protein insertase YidC from Brucella melitensis biotype 1 (strain ATCC 23456 / CCUG 17765 / NCTC 10094 / 16M).